A 434-amino-acid polypeptide reads, in one-letter code: Cytochrome P450 144 (434 aa).

Substrate is bound by residues D124 and H128. Residues R132, R326, H383, and C385 each coordinate heme.

Belongs to the cytochrome P450 family. In terms of assembly, monomer. The cofactor is heme.

In Mycobacterium tuberculosis (strain CDC 1551 / Oshkosh), this protein is Cytochrome P450 144 (cyp144).